A 366-amino-acid polypeptide reads, in one-letter code: Chorismate synthase (366 aa).

An NADP(+)-binding site is contributed by arginine 48. FMN-binding positions include 125–127, glycine 285, 300–304, and arginine 327; these read RSS and KPTPS.

The protein belongs to the chorismate synthase family. FMNH2 serves as cofactor.

The catalysed reaction is 5-O-(1-carboxyvinyl)-3-phosphoshikimate = chorismate + phosphate. It participates in metabolic intermediate biosynthesis; chorismate biosynthesis; chorismate from D-erythrose 4-phosphate and phosphoenolpyruvate: step 7/7. Catalyzes the anti-1,4-elimination of the C-3 phosphate and the C-6 proR hydrogen from 5-enolpyruvylshikimate-3-phosphate (EPSP) to yield chorismate, which is the branch point compound that serves as the starting substrate for the three terminal pathways of aromatic amino acid biosynthesis. This reaction introduces a second double bond into the aromatic ring system. In Methanococcoides burtonii (strain DSM 6242 / NBRC 107633 / OCM 468 / ACE-M), this protein is Chorismate synthase.